Consider the following 23-residue polypeptide: SIQVIVVTDGERGLIYPPLSNIR.

The protein belongs to the malic enzymes family. Homotetramer.

The catalysed reaction is (S)-malate + NADP(+) = pyruvate + CO2 + NADPH. It carries out the reaction oxaloacetate + H(+) = pyruvate + CO2. The polypeptide is NADP-dependent malic enzyme (Populus euphratica (Euphrates poplar)).